The primary structure comprises 388 residues: MKIHEYQGKEILRKFGVAVPRGKPAFSVDEAVKVAQELGGPVWVVKAQIHAGGRGKGGGVKVAKSLEQVREYSNQILGMQLKTHQTGPEGQKVNRLLIEEGADIKKELYVGIVIDRVSQKVVVMASSEGGMDIEEVAEKTPEAIHKVAVEPSVGLQDAEADDLAKKIGVPDASIPQAREILKGLYKSFWETDASLAEINPLVLTGDGKVIALDAKFNFDSNALFRHPEIVAYRDLDEEDPAEIEASKFDLAYISLDGNIGCLVNGAGLAMATMDTIKLFGGEPANFLDVGGGATTEKVTEAFKLMLKNPGLKAILVNIFGGIMRCDVIAEGVIAGSKAVNLNVPLVVRMKGTNEDLGKKMLAESGLPIISADSMEEAAQKVVAAAAGK.

Residues 9-244 form the ATP-grasp domain; sequence KEILRKFGVA…LDEEDPAEIE (236 aa). Residues Lys46, 53-55, Glu99, Ala102, and Glu107 each bind ATP; that span reads GRG. Mg(2+) contacts are provided by Asn199 and Asp213. Residues Asn264 and 321-323 contribute to the substrate site; that span reads GIM.

Belongs to the succinate/malate CoA ligase beta subunit family. As to quaternary structure, heterotetramer of two alpha and two beta subunits. Requires Mg(2+) as cofactor.

The enzyme catalyses succinate + ATP + CoA = succinyl-CoA + ADP + phosphate. It carries out the reaction GTP + succinate + CoA = succinyl-CoA + GDP + phosphate. It participates in carbohydrate metabolism; tricarboxylic acid cycle; succinate from succinyl-CoA (ligase route): step 1/1. Its function is as follows. Succinyl-CoA synthetase functions in the citric acid cycle (TCA), coupling the hydrolysis of succinyl-CoA to the synthesis of either ATP or GTP and thus represents the only step of substrate-level phosphorylation in the TCA. The beta subunit provides nucleotide specificity of the enzyme and binds the substrate succinate, while the binding sites for coenzyme A and phosphate are found in the alpha subunit. In Burkholderia mallei (strain NCTC 10247), this protein is Succinate--CoA ligase [ADP-forming] subunit beta.